Consider the following 192-residue polypeptide: Leucine-rich repeat-containing protein 51 (192 aa).

LRR repeat units follow at residues 50 to 71 (MTQSLWLNNNVLTDLRDFNHAV), 80 to 101 (NLAWIDLSFNDLTSIDPVLTTF), and 103 to 124 (NLSVLYLHGNSIQRLGEVNKLA). In terms of domain architecture, LRRCT spans 137 to 175 (NPIEEEKGYRQYVLCTLPHITTFDFSGVTKADRTTAEVW).

The protein resides in the cytoplasm. This Bos taurus (Bovine) protein is Leucine-rich repeat-containing protein 51.